A 391-amino-acid polypeptide reads, in one-letter code: MAIINMTDLDLQNKRVLIREDLNVPVSDGVVTSDARLRASLPTIQLALKKGAAVMVMSHLGRPTEGEFNAEYSMQPVVDYLAKALDCPVRLVSDYLDGVDVNVGEVVVFENVRFNVGEGKNDEALSKKMAALCDVYVMDAFGTAHRAQASTHGVGVYAPIACAGPLLSQELDALGKALDNPARPMVAIVGGSKVSTKLTVLESLSTKVDQLVVGGGIANTFIAAAGYKVGKSLYEADLVEEAKRLVANARSRGGDIPVPTDVVVASEFSPTAAATLKSVADVTDSDMIFDIGPDSAEALAKIIEQAGTIVWNGPVGVFEFDQFGEGTKRIAQAIANSKAFSIAGGGDTLAAVDKYNIADKVSYISTGGGAFLEFLEGKELPAVAMLEKRGA.

Substrate is bound by residues 21-23 (DLN), Arg36, 59-62 (HLGR), Arg113, and Arg146. ATP is bound by residues Lys197, Glu319, and 345-348 (GGDT).

This sequence belongs to the phosphoglycerate kinase family. Monomer.

Its subcellular location is the cytoplasm. It catalyses the reaction (2R)-3-phosphoglycerate + ATP = (2R)-3-phospho-glyceroyl phosphate + ADP. The protein operates within carbohydrate degradation; glycolysis; pyruvate from D-glyceraldehyde 3-phosphate: step 2/5. This Shewanella frigidimarina (strain NCIMB 400) protein is Phosphoglycerate kinase.